Consider the following 348-residue polypeptide: Probable dual-specificity RNA methyltransferase RlmN (348 aa).

The active-site Proton acceptor is the glutamate 89. A Radical SAM core domain is found at 95-328 (HKNRNTVCVS…VTLRISYGSR (234 aa)). A disulfide bridge connects residues cysteine 102 and cysteine 333. [4Fe-4S] cluster-binding residues include cysteine 109, cysteine 113, and cysteine 116. Residues 159-160 (GE), serine 191, 214-216 (SLH), and asparagine 290 each bind S-adenosyl-L-methionine. The active-site S-methylcysteine intermediate is cysteine 333.

The protein belongs to the radical SAM superfamily. RlmN family. [4Fe-4S] cluster is required as a cofactor.

Its subcellular location is the cytoplasm. It catalyses the reaction adenosine(2503) in 23S rRNA + 2 reduced [2Fe-2S]-[ferredoxin] + 2 S-adenosyl-L-methionine = 2-methyladenosine(2503) in 23S rRNA + 5'-deoxyadenosine + L-methionine + 2 oxidized [2Fe-2S]-[ferredoxin] + S-adenosyl-L-homocysteine. The catalysed reaction is adenosine(37) in tRNA + 2 reduced [2Fe-2S]-[ferredoxin] + 2 S-adenosyl-L-methionine = 2-methyladenosine(37) in tRNA + 5'-deoxyadenosine + L-methionine + 2 oxidized [2Fe-2S]-[ferredoxin] + S-adenosyl-L-homocysteine. Functionally, specifically methylates position 2 of adenine 2503 in 23S rRNA and position 2 of adenine 37 in tRNAs. This chain is Probable dual-specificity RNA methyltransferase RlmN, found in Dictyoglomus thermophilum (strain ATCC 35947 / DSM 3960 / H-6-12).